The primary structure comprises 261 residues: MKVHSSVLIEGEVEIPEDVEIGAYTVIQGNVKIGKGTKIGNRVTIKGNVTIGENCKIFDGAVIGEAPQHLKYEGEETSVEIGNNVIIREYVTIHRGTKLDKGKTVVGDNVMLMAYSHVAHDCVVGNNVIMANCATLGGHVVVGDYALIGGLSAVHQWARVGEHAMVGGLTGVSLDIPPYTVASGQHAKLYGINIIGLRRRGFPEEVIKAISKAYRIIFRSPLPRQKAPEIVFQELGQYEEVRKMVEFIKSSKRGVARHHKD.

This sequence belongs to the transferase hexapeptide repeat family. LpxA subfamily. In terms of assembly, homotrimer.

Its subcellular location is the cytoplasm. It catalyses the reaction a (3R)-hydroxyacyl-[ACP] + UDP-N-acetyl-alpha-D-glucosamine = a UDP-3-O-[(3R)-3-hydroxyacyl]-N-acetyl-alpha-D-glucosamine + holo-[ACP]. Its pathway is glycolipid biosynthesis; lipid IV(A) biosynthesis; lipid IV(A) from (3R)-3-hydroxytetradecanoyl-[acyl-carrier-protein] and UDP-N-acetyl-alpha-D-glucosamine: step 1/6. Functionally, involved in the biosynthesis of lipid A, a phosphorylated glycolipid that anchors the lipopolysaccharide to the outer membrane of the cell. In Aquifex aeolicus (strain VF5), this protein is Acyl-[acyl-carrier-protein]--UDP-N-acetylglucosamine O-acyltransferase.